The primary structure comprises 137 residues: Large ribosomal subunit protein uL16 (137 aa).

This sequence belongs to the universal ribosomal protein uL16 family. As to quaternary structure, part of the 50S ribosomal subunit.

Its function is as follows. Binds 23S rRNA and is also seen to make contacts with the A and possibly P site tRNAs. In Streptococcus thermophilus (strain CNRZ 1066), this protein is Large ribosomal subunit protein uL16.